Reading from the N-terminus, the 96-residue chain is Putative regulatory protein DET0036 (96 aa).

Belongs to the RemA family.

The protein is Putative regulatory protein DET0036 of Dehalococcoides mccartyi (strain ATCC BAA-2266 / KCTC 15142 / 195) (Dehalococcoides ethenogenes (strain 195)).